The following is a 1692-amino-acid chain: MRRPPPLGPTTASGPEGNVRNLQKRQAPGPGAAGGCGPEAGGCRENKQKRRMVARATPGRGEVESDKSVAASGAGKAARRQVEGRRGPVSPSDSSDPRGLEAAKEAELPLQTERHTKEKRKVTEASSDDPQPGLDLVRKESLTSSESFQTVECLQSLGKESIIEGIKRRIRNKKLKSLENPPLKITENEATQNIKVEFQDELYKNTPKYSCNILSPEVENNSVLKLRDCNCFPHSKGCNDENNLPYKPDGGCMHVAENFSKKENLRSLAEKSDTNSIPQLLQTEENVMGVNKLLPEESDLYQSKTNGLLSCLQHEKNKYSIEESSVGRKPRKRMKLSEKADETVTEMNFSNEYNKSELMLQENQMIADGKEAETKSPLNVLRKVSHNTVSLMDHLLSVPETVEKETSSEHHVNAVFQKTIEPLLKEETENASEPLGYESMASKEDFKSMKSFIGKSPNEYHIERRSSREDLRSASEELKLSCQRTIPMTGKRTWPYYSCARISAWCWKKASLPESSYFLRGSQESCRQVDVPKHQTNQTHLTDSKLLLQSSLTETNTESSSKEKLDSNSNCLSSVSAVEPTLMVIKEPIIKDDKKIKSEELSRRGSEVISNTTEDTQLTSETQSLTGNKKKARGNLTKLNLTATSKDGQEANNSAGKTIHRKACIAQQTFIVPDLVKILNTGRLTNFKIPLLKNKSEKRKEVNAKSSEREAYSPLELLDNLSGADVRQNRSKENVSMMMLGPQTLSIRNSVTPVQASSDSFYNKKSYSISPSFTKQGNNSKPSNHVSEPGNIVSNKEVASLTVENNAFSCDPGYVEKSPSFCCNEQETFRPVSSEVRGRKITKNFSEVGFPDILKAYEDDVLLIDVIQDDPDLFGVSNEGELSFTSEVPKISQEPNVAGEHQSTDSKYMETPVKKEPSDDLRELPVLDCGWIKPDICASNSAESEIKRDPKDVNTSLGEVANETSENETLGDFSEQIKGSDLDEKHRFTDKVITKEEKENIYEVCKSKDSRNADFMVGECQFAVPVPKPLCLLVPPLNLSGRQEDTILNTWMNDFRFLGKHSVLKLQNPETCEIFKREKNVGVFQKSLGLMIPYKYCKFHFNTLRGCERPLCKFAHVPEQGDEKVCMDVFKKYININELCLLQRAVNIFMEYYRKFPPGVYFDLQVLNDLLNSLLKHCLLKEVFQIVNLSIMVKMLPSLKILLNIFEYVATMKLRNAVPALIDIFCKLVEAGMVLDPEHFNYIVKLLYQVQASKQEITAVLEMKSRLQMRRFKKNWKCDLDSALNKLEHCKEKGDWTKLGKLYINVKMGCEKFADFQTFCACIAETLTKNYEDERPDIPFCEFAETVSKDPQNSKVDKGVLGRIGISAMYFYHKLLQWSKGRKVLEKLYELKIHFTSLKGLIGPEKLASRCQIVNVAAEIFLKSGSLDGAIWVMRESEWIINTPLWPCDRLDVLNRHNLLCTIAHEILAKSLYRQTFEVLQNLPGFQNSQETVEVSQYSLLFNKLLGSCIESSSLGMSSSVAEFMISKSIPIDFSFLRRLITSLGRSRLWLKARAHYKSALSLGCYPPLEGNLYRKLLLIPSYLSEIEMLLAIEIFMVSNASSIQSPGTSTQILQIVLKRCEDNQSRSNDDYQAAVERLIMAARISDPKLFVKHMTVNVNKEQVYSLEHCSALKWLKENMKWAGKVWLFSNH.

Disordered stretches follow at residues 1–135, 600–629, and 894–919; these read MRRP…PGLD, ELSR…TGNK, and EPNV…EPSD. Gly residues predominate over residues 31–40; that stretch reads GAAGGCGPEA. The segment covering 95 to 116 has biased composition (basic and acidic residues); sequence SDPRGLEAAKEAELPLQTERHT. Residues 608–627 show a composition bias toward polar residues; the sequence is VISNTTEDTQLTSETQSLTG. The span at 902–919 shows a compositional bias: basic and acidic residues; sequence QSTDSKYMETPVKKEPSD.

The protein resides in the cytoplasm. It is found in the cytosol. Important for normal spermatogenesis and male fertility. Specifically required for progression to the post-meiotic stages of spermatocyte development. Seems to be necessary for normal expression levels of a number of testis-expressed gene transcripts, although its role in this process is unclear. This is Protein TOPAZ1 (TOPAZ1) from Homo sapiens (Human).